Reading from the N-terminus, the 216-residue chain is Small ribosomal subunit protein uS3 (216 aa).

A KH type-2 domain is found at 39–111 (IYKFFDKLVR…DINLQVSLLK (73 aa)).

This sequence belongs to the universal ribosomal protein uS3 family. As to quaternary structure, part of the 30S ribosomal subunit. Forms a tight complex with proteins S10 and S14.

In terms of biological role, binds the lower part of the 30S subunit head. Binds mRNA in the 70S ribosome, positioning it for translation. This Mycoplasmopsis agalactiae (strain NCTC 10123 / CIP 59.7 / PG2) (Mycoplasma agalactiae) protein is Small ribosomal subunit protein uS3.